A 100-amino-acid chain; its full sequence is Large ribosomal subunit protein bL21 (100 aa).

It belongs to the bacterial ribosomal protein bL21 family. As to quaternary structure, part of the 50S ribosomal subunit. Contacts protein L20.

This protein binds to 23S rRNA in the presence of protein L20. In Wolbachia sp. subsp. Brugia malayi (strain TRS), this protein is Large ribosomal subunit protein bL21.